A 371-amino-acid chain; its full sequence is Putative glutamate--cysteine ligase 2 (371 aa).

The protein belongs to the glutamate--cysteine ligase type 2 family. YbdK subfamily. As to quaternary structure, homodimer.

It catalyses the reaction L-cysteine + L-glutamate + ATP = gamma-L-glutamyl-L-cysteine + ADP + phosphate + H(+). Its function is as follows. ATP-dependent carboxylate-amine ligase which exhibits weak glutamate--cysteine ligase activity. The chain is Putative glutamate--cysteine ligase 2 from Klebsiella pneumoniae (strain 342).